Consider the following 298-residue polypeptide: DegV domain-containing protein UU535 (298 aa).

The DegV domain occupies 5–287 (FLIMTDSSTT…KGALGIQVIA (283 aa)). Ser65 and Ser96 together coordinate hexadecanoate.

May bind long-chain fatty acids, such as palmitate, and may play a role in lipid transport or fatty acid metabolism. The sequence is that of DegV domain-containing protein UU535 from Ureaplasma parvum serovar 3 (strain ATCC 700970).